We begin with the raw amino-acid sequence, 236 residues long: Peroxisomal coenzyme A diphosphatase NUDT7 (236 aa).

N6-succinyllysine is present on Lys-20. A Nudix hydrolase domain is found at Ser-37–Asp-169. The Nudix box signature appears at Lys-77–Gly-98. The Mg(2+) site is built by Glu-92 and Glu-96. N6-succinyllysine is present on Lys-178. Residues Ser-234 to Leu-236 carry the Microbody targeting signal motif.

It belongs to the Nudix hydrolase family. PCD1 subfamily. In terms of assembly, monomer. Requires Mn(2+) as cofactor. Mg(2+) serves as cofactor. In terms of tissue distribution, highly expressed in liver, brown adipose tissue and heart. Expressed at intermediate level in lung and kidney and at low level in brain. As to expression, expressed in liver, brown adipose tissue and heart at 20 times lower levels than isoform 1.

It localises to the peroxisome. The enzyme catalyses hexanoyl-CoA + H2O = hexanoyl-4'-phosphopantetheine + adenosine 3',5'-bisphosphate + 2 H(+). It carries out the reaction octanoyl-CoA + H2O = S-octanoyl-4'-phosphopantetheine + adenosine 3',5'-bisphosphate + 2 H(+). It catalyses the reaction butanoyl-CoA + H2O = S-butanoyl-4'-phosphopantetheine + adenosine 3',5'-bisphosphate + 2 H(+). The catalysed reaction is decanoyl-CoA + H2O = decanoyl-4'-phosphopantetheine + adenosine 3',5'-bisphosphate + 2 H(+). The enzyme catalyses dodecanoyl-CoA + H2O = S-dodecanoyl-4'-phosphopantetheine + adenosine 3',5'-bisphosphate + 2 H(+). It carries out the reaction tetradecanoyl-CoA + H2O = tetradecanoyl-4'-phosphopantetheine + adenosine 3',5'-bisphosphate + 2 H(+). It catalyses the reaction choloyl-CoA + H2O = S-choloyl-4'-phosphopantetheine + adenosine 3',5'-bisphosphate + 2 H(+). The catalysed reaction is 3alpha,7alpha,12alpha-trihydroxy-5beta-cholestan-26-oyl-CoA + H2O = 3alpha,7alpha,12alpha-trihydroxy-5beta-cholestan-26-oyl-4'-phosphopantetheine + adenosine 3',5'-bisphosphate + 2 H(+). The enzyme catalyses acetyl-CoA + H2O = S-acetyl-4'-phosphopantetheine + adenosine 3',5'-bisphosphate + 2 H(+). It carries out the reaction CoA + H2O = (R)-4'-phosphopantetheine + adenosine 3',5'-bisphosphate + 2 H(+). It catalyses the reaction propanoyl-CoA + H2O = propanoyl-4'-phosphopantetheine + adenosine 3',5'-bisphosphate + 2 H(+). The catalysed reaction is malonyl-CoA + H2O = malonyl-4'-phosphopantetheine + adenosine 3',5'-bisphosphate + 2 H(+). The enzyme catalyses succinyl-CoA + H2O = succinyl-4'-phosphopantetheine + adenosine 3',5'-bisphosphate + 2 H(+). It carries out the reaction a 5'-end CoA-ribonucleoside in mRNA + H2O = a 5'-end phospho-adenosine-phospho-ribonucleoside in mRNA + (R)-4'-phosphopantetheine + 2 H(+). With respect to regulation, inhibited by fluoride. Fatty acyl-coenzyme A (CoA) diphosphatase that hydrolyzes fatty acyl-CoA to yield acyl-4'-phosphopantetheine and adenosine 3',5'-bisphosphate. Cleaves CoA, CoA esters and oxidized CoA with similar efficiencies. Preferentially hydrolyzes medium-chain acyl-CoAs and bile acid-CoAs. Has no activity toward NDP-sugars, CDP-alcohols, (deoxy)nucleoside 5'-triphosphates, nucleoside 5'-di or monophosphates, diadenosine polyphosphates, NAD, NADH, NADP, NADPH or thymidine-5'-monophospho-p-nitrophenyl ester. May be required to eliminate oxidized CoA from peroxisomes, or regulate CoA and acyl-CoA levels in this organelle in response to metabolic demand. Does not play a role in U8 snoRNA decapping activity. Binds U8 snoRNA. Exhibits decapping activity towards dpCoA-capped RNAs in vitro. This is Peroxisomal coenzyme A diphosphatase NUDT7 from Mus musculus (Mouse).